A 252-amino-acid chain; its full sequence is 3-dehydroquinate dehydratase (252 aa).

3-dehydroquinate is bound by residues Ser-21, 46 to 48, and Arg-82; that span reads EWR. The active-site Proton donor/acceptor is the His-143. Lys-170 serves as the catalytic Schiff-base intermediate with substrate. Arg-213, Ser-232, and Gln-236 together coordinate 3-dehydroquinate.

The protein belongs to the type-I 3-dehydroquinase family. In terms of assembly, homodimer.

It catalyses the reaction 3-dehydroquinate = 3-dehydroshikimate + H2O. Its pathway is metabolic intermediate biosynthesis; chorismate biosynthesis; chorismate from D-erythrose 4-phosphate and phosphoenolpyruvate: step 3/7. Functionally, involved in the third step of the chorismate pathway, which leads to the biosynthesis of aromatic amino acids. Catalyzes the cis-dehydration of 3-dehydroquinate (DHQ) and introduces the first double bond of the aromatic ring to yield 3-dehydroshikimate. The polypeptide is 3-dehydroquinate dehydratase (Escherichia coli O7:K1 (strain IAI39 / ExPEC)).